Here is a 173-residue protein sequence, read N- to C-terminus: Calcium-binding protein 5 (173 aa).

4 EF-hand domains span residues 28-63 (DEIE…MGYM), 82-99 (GRVD…KLLA), 105-140 (IGVQ…LLGD), and 142-173 (LTSQ…MMSR). Residues Asp-41, Asp-43, Asp-45, and Asp-52 each contribute to the Ca(2+) site. Ca(2+)-binding residues include Asp-118, Asn-120, Asp-122, Glu-124, Glu-129, Asp-155, Asn-157, Asp-159, Thr-161, and Glu-166.

In terms of assembly, interacts with CACNA1C (via C-terminal CDB motif) in a calcium-dependent manner. Interacts with STXBP1. Interacts with MYO6. In terms of tissue distribution, expressed in the retina (at protein level).

It localises to the cytoplasm. Functionally, inhibits calcium-dependent inactivation of L-type calcium channel and shifts voltage dependence of activation to more depolarized membrane potentials. Involved in the transmission of light signals. May positively regulate neurotransmitter vesicle endocytosis and exocytosis in a salt-dependent manner. May play a role in the extension and network organization of neurites. The sequence is that of Calcium-binding protein 5 (CABP5) from Bos taurus (Bovine).